Reading from the N-terminus, the 590-residue chain is Vesicular glutamate transporter 3 (590 aa).

The Cytoplasmic portion of the chain corresponds to 1–76; the sequence is MPLGGFAGLK…CGCFGLPKRY (76 aa). The chain crosses the membrane as a helical span at residues 77–97; that stretch reads IIAMLSGLGFCISFGIRCNLG. Residues 98–130 are Vesicular-facing; it reads VAIVEMVNNNTVYINGTAVMQPAQFNWDPETVG. N-linked (GlcNAc...) asparagine glycosylation is found at N106 and N112. The chain crosses the membrane as a helical span at residues 131-151; sequence LIHGSFFWGYIVTQIPGGFIS. At 152 to 153 the chain is on the cytoplasmic side; the sequence is NK. Residues 154 to 174 traverse the membrane as a helical segment; sequence LAANRVFGAAIFLTSVLNMFI. Residues 175–182 are Vesicular-facing; the sequence is PSAARVHY. A helical transmembrane segment spans residues 183–203; that stretch reads GCVMFVRILQGLVEGVTYPAC. Residues 204-221 lie on the Cytoplasmic side of the membrane; sequence HGMWSKWAPPLERSRLAT. A helical membrane pass occupies residues 222 to 242; it reads TSFCGSYAGAVIAMPLAGILV. Topologically, residues 243–249 are vesicular; the sequence is QYVGWPS. A helical transmembrane segment spans residues 250-270; the sequence is VFYIYGVFGIIWYIFWILLAY. Topologically, residues 271 to 315 are cytoplasmic; it reads NSPAVHPTISEEERNYIETSIGEGANLMSSTEKFKTPWREFFTSM. The chain crosses the membrane as a helical span at residues 316–336; sequence PVYAIIVANFCRSWTFYLLLI. At 337–354 the chain is on the vesicular side; the sequence is SQPAYFEEVFGFPISKVG. Residues 355-375 traverse the membrane as a helical segment; sequence ILSAVPHMVMTIIVPIGGQLA. The Cytoplasmic portion of the chain corresponds to 376–391; the sequence is DFLRSRKILSTTTVRK. The chain crosses the membrane as a helical span at residues 392–412; it reads IMNCGGFGMEATLLLVVGFSH. Over 413-414 the chain is Vesicular; it reads TR. The helical transmembrane segment at 415–435 threads the bilayer; the sequence is AVAISFLILAVGFSGFAISGF. Topologically, residues 436–448 are cytoplasmic; that stretch reads NVNHLDIAPRYAS. Residues 449 to 469 form a helical membrane-spanning segment; it reads ILMGISNGVGTLSGMVCPLIV. The Vesicular portion of the chain corresponds to 470-482; the sequence is GALTKHKTRLEWQ. The chain crosses the membrane as a helical span at residues 483–503; sequence HVFVIASMVHYTGVIFYAIFA. Topologically, residues 504-587 are cytoplasmic; it reads SGEKQDWADP…NHYENGEYQT (84 aa). A compositionally biased stretch (acidic residues) spans 526–535; sequence EDELADETEP. The interval 526–590 is disordered; that stretch reads EDELADETEP…ENGEYQTQYQ (65 aa). The segment covering 536 to 557 has biased composition (polar residues); sequence SSDSGLATRQKTYGTTDNSSGR.

Belongs to the major facilitator superfamily. Sodium/anion cotransporter family. VGLUT subfamily.

Its subcellular location is the cytoplasmic vesicle. The protein localises to the secretory vesicle. It is found in the synaptic vesicle membrane. It localises to the cell membrane. The protein resides in the synapse. Its subcellular location is the synaptosome. The catalysed reaction is L-glutamate(out) = L-glutamate(in). It catalyses the reaction 3 Na(+)(out) + phosphate(out) = 3 Na(+)(in) + phosphate(in). The enzyme catalyses chloride(in) = chloride(out). The L-glutamate uniporter activity exhibits a biphasic dependence on chloride concentration. Chloride channel activity is allosterically activated by lumenal H(+) and Cl(-) leading to synaptic vesicles acidification. The glutamate transport activity is allosterically activated by lumenal H(+) and Cl(-), preventing non-vesicular L-glutamate release. In terms of biological role, multifunctional transporter that transports L-glutamate as well as multiple ions such as chloride, sodium and phosphate. At the synaptic vesicle membrane, mainly functions as an uniporter that mediates the uptake of L-glutamate into synaptic vesicles at presynaptic nerve terminals of excitatory neural cells. The L-glutamate uniporter activity is electrogenic and is driven by the proton electrochemical gradient, mainly by the electrical gradient established by the vacuolar H(+)-ATPase across the synaptic vesicle membrane. In addition, functions as a chloride channel that allows a chloride permeation through the synaptic vesicle membrane that affects the proton electrochemical gradient and promotes synaptic vesicles acidification. At the plasma membrane, following exocytosis, functions as a symporter of Na(+) and phosphate from the extracellular space to the cytoplasm allowing synaptic phosphate homeostasis regulation. The symporter activity is electrogenic. Moreover, operates synergistically with SLC18A3/VACHT under a constant H(+) gradient, thereby allowing striatal vesicular acetylcholine uptake. This chain is Vesicular glutamate transporter 3, found in Danio rerio (Zebrafish).